We begin with the raw amino-acid sequence, 197 residues long: RNA polymerase II subunit A C-terminal domain phosphatase ssup-72 (197 aa).

S39 is modified (phosphoserine).

The protein belongs to the SSU72 phosphatase family. In terms of assembly, may interact with synd-1 (via C-terminus); the interaction may prevent ssup-72 binding to RNA polymerase II ama-1. May interact with RNA polymerase II ama-1. In terms of processing, may be phosphorylated by kin-20. Expressed in epidermis, intestine and nervous system.

It is found in the nucleus. It catalyses the reaction O-phospho-L-seryl-[protein] + H2O = L-seryl-[protein] + phosphate. The catalysed reaction is O-phospho-L-threonyl-[protein] + H2O = L-threonyl-[protein] + phosphate. Protein phosphatase that dephosphorylates 'Ser-5' of the heptad repeats YSPTSPS in the C-terminal domain of the large RNA polymerase II subunit ama-1. By regulating the phosphorylation status of ama-1 and thus ama-1 binding to specific polyadenylation sites, regulates alternative polyadenylation of pre-mRNAs, including unc-44 and dlk-1 mRNAs. This results in the tissue-specific expression of unc-44 isoforms. The sequence is that of RNA polymerase II subunit A C-terminal domain phosphatase ssup-72 from Caenorhabditis elegans.